The sequence spans 90 residues: Acylphosphatase (90 aa).

In terms of domain architecture, Acylphosphatase-like spans 3 to 90 (RYSAIVQGRV…DGEKKFSIKY (88 aa)). Residues R18 and N36 contribute to the active site.

This sequence belongs to the acylphosphatase family.

It carries out the reaction an acyl phosphate + H2O = a carboxylate + phosphate + H(+). The chain is Acylphosphatase (acyP) from Clostridium beijerinckii (strain ATCC 51743 / NCIMB 8052) (Clostridium acetobutylicum).